Consider the following 215-residue polypeptide: MGIRAQQKEKTRRSLVEAAFSQLSAERSFASLSLREVAREAGIAPTSFYRHFRDVDELGLTMVDESGLMLRQLMRQARQRIAKGGSVIRTSVSTFMEFIGNNPNAFRLLLRERSGTSAAFRAAVAREIQHFIAELADYLELENHMPRAFTEAQAEAMVTIVFSAGAEALDVGVEQRRQLEERLVLQLRMISKGAYYWYRREQEKTAIIPGNVKDE.

The 61-residue stretch at 10–70 folds into the HTH tetR-type domain; it reads KTRRSLVEAA…TMVDESGLML (61 aa). Positions 33–52 form a DNA-binding region, H-T-H motif; the sequence is SLREVAREAGIAPTSFYRHF.

Homodimer.

Its subcellular location is the cytoplasm. Represses the transcription of fabB, involved in unsaturated fatty acid (UFA) biosynthesis. By controlling UFA production, FabR directly influences the physical properties of the membrane bilayer. The protein is HTH-type transcriptional repressor FabR of Shigella boydii serotype 18 (strain CDC 3083-94 / BS512).